The sequence spans 519 residues: uncharacterized protein (519 aa).

13 consecutive transmembrane segments (helical) span residues 19–39, 42–62, 87–107, 128–148, 179–199, 220–240, 270–290, 311–331, 345–365, 386–406, 413–433, 475–495, and 496–516; these read FSSSVWSIVPALLAIILAIAT, VLVSLSAGIIIGSLMLSDWQI, MNIVLFLLLLGVLTALLTVSG, LLAASLVFVTFIDDYFHSLAV, VMMPVSSWGAYIITLIGGLLA, FYAIFSIIMVFFVAYFSFDIA, LILPILVLIIATVSMMIYTGA, VGTSLVVGGFCSIIISTLLII, WIVGIKSMSGAIAILFFAWTI, IPMQFLPVILFVLGAAMAFST, FGIMLPIAAAMAANAAPELLL, LPYAATVATATSIGYIVVGFT, and YSGLAGFAATAVSLIVIIFAV.

The protein resides in the cell membrane. This is an uncharacterized protein from Haemophilus influenzae (strain ATCC 51907 / DSM 11121 / KW20 / Rd).